We begin with the raw amino-acid sequence, 669 residues long: Cysteine-rich receptor-like protein kinase 10 (669 aa).

Residues 1–34 (MRRNTDQESPIMSYYSSFFFLFLFSFLTSFRVSA) form the signal peptide. The Extracellular segment spans residues 35–285 (QDPTYVYHTC…PRSGKDGNSK (251 aa)). 2 consecutive Gnk2-homologous domains span residues 38 to 142 (TYVY…NQNI) and 148 to 252 (TTGG…IYAF). 4 N-linked (GlcNAc...) asparagine glycosylation sites follow: Asn49, Asn53, Asn71, and Asn80. 2 cysteine pairs are disulfide-bonded: Cys96-Cys105 and Cys108-Cys133. Asn114, Asn159, Asn185, and Asn196 each carry an N-linked (GlcNAc...) asparagine glycan. Cystine bridges form between Cys209–Cys218 and Cys221–Cys243. Positions 260–274 (PPPPPPSISTPPVSA) are enriched in pro residues. Positions 260–280 (PPPPPPSISTPPVSAPPRSGK) are disordered. The helical transmembrane segment at 286 to 306 (VLVIAIVVPIIVAVLLFIAGY) threads the bilayer. Residues 307 to 669 (CFLTRRARKS…DASITDIHPR (363 aa)) lie on the Cytoplasmic side of the membrane. Residues 348–634 (FVESNKIGQG…TLPVPRQPGL (287 aa)) form the Protein kinase domain. Residues 354 to 362 (IGQGGFGEV) and Lys376 each bind ATP. Tyr421 carries the post-translational modification Phosphotyrosine. Residue Asp473 is the Proton acceptor of the active site. Phosphoserine is present on Ser477. Thr513 carries the phosphothreonine modification. Tyr521 bears the Phosphotyrosine mark.

It belongs to the protein kinase superfamily. Ser/Thr protein kinase family. CRK subfamily. As to quaternary structure, interacts with CRKIP1 (KAPP), CRKIP2 and CRKIP3, three kinase-associated type 2C proteins.

It localises to the membrane. The enzyme catalyses L-seryl-[protein] + ATP = O-phospho-L-seryl-[protein] + ADP + H(+). It catalyses the reaction L-threonyl-[protein] + ATP = O-phospho-L-threonyl-[protein] + ADP + H(+). This chain is Cysteine-rich receptor-like protein kinase 10 (CRK10), found in Arabidopsis thaliana (Mouse-ear cress).